A 121-amino-acid polypeptide reads, in one-letter code: Trypsin/alpha-amylase inhibitor CMX1/CMX3 (121 aa).

An N-terminal signal peptide occupies residues 1–24 (MAFKHQLILSTAILLAVLAAASAS).

This sequence belongs to the protease inhibitor I6 (cereal trypsin/alpha-amylase inhibitor) family.

It localises to the secreted. This Triticum aestivum (Wheat) protein is Trypsin/alpha-amylase inhibitor CMX1/CMX3.